Consider the following 116-residue polypeptide: MSLIMEAHSEHLCLRMIRLNADEMEEPLLHYMSYERLVNTYERYKSIGIVAEIAKRVFVETRILMTKVSTAQCMKPGREKRWKGSVRRRSLENFRLRGGIQWYSHACRGMAIGLQN.

Belongs to the UPF0329 family.

This is UPF0329 protein ECU05_1650 from Encephalitozoon cuniculi (strain GB-M1) (Microsporidian parasite).